A 362-amino-acid polypeptide reads, in one-letter code: Thiol protease aleurain (362 aa).

The first 22 residues, 1–22, serve as a signal peptide directing secretion; that stretch reads MAHARVLLLALAVLATAAVAVA. Residues 23-143 constitute a propeptide, activation peptide; it reads SSSSFADSNP…GNHLMRDAAA (121 aa). Cystine bridges form between Cys-165-Cys-208 and Cys-199-Cys-241. Cys-168 is an active-site residue. A glycan (N-linked (GlcNAc...) asparagine) is linked at Asn-188. Asn-257 is a glycosylation site (N-linked (GlcNAc...) asparagine). An intrachain disulfide couples Cys-299 to Cys-349. Catalysis depends on residues His-308 and Asn-328.

This sequence belongs to the peptidase C1 family.

It is found in the vacuole. It catalyses the reaction Hydrolysis of proteins, acting as an aminopeptidase (notably, cleaving Arg-|-Xaa bonds) as well as an endopeptidase.. Its function is as follows. May play a role in proteolysis leading to mobilization of nitrogen during senescence and starvation. In Hordeum vulgare (Barley), this protein is Thiol protease aleurain.